We begin with the raw amino-acid sequence, 1564 residues long: Tetratricopeptide repeat protein 37 (1564 aa).

19 TPR repeats span residues 6–39, 40–73, 75–110, 116–149, 237–271, 306–339, 420–453, 456–492, 493–527, 564–597, 598–631, 633–665, 678–713, 743–776, 861–894, 980–1013, 1020–1050, 1051–1084, and 1400–1433; these read VKAILKNARDAIRNKDYKEVLKQCKAVLKLEKNN, YNAWVFIGLAASELEQPDQAQAAYRKAVEIEPDQ, LAWQGLGNLYEKVNQKDFKEDLPNVYQKLLELYRSS, YEICKKLSDLYQQEKNYVPAAHTWHQLIKMKEDE, IYPLKVLALHYIKSGDITEEAICCYSKLLELDPLN, PSAWCCLAQAQLKIHKYAEALVSCDQAINGATQD, AEGHFLEGLLQYIQKNYSAAEISLQYALERKPEN, YHYYLGLNYWFMSKETRRDKTKAVTQFLKAAKMDPFM, SRAFYYLGHYYSEVAGDKSRARGCYKKAFELDDSD, KWAWLRRGLFYLRVGQHSKSVSDLHAALRADPKD, SNCWECLGEAYLSRGGYTTALKSFMKASELNPDS, YSVYKIASIKQILGTYKEAVNEYQQILMKSGEY, MLAKSALSDFLDLKAVDAIEKAIEFLARAIRLRPDL, LLGNDEEQQLLNKPEVLALGGRCYGRALRIQSTA, VAAWTNLGALYLMNGNIELSHQAFKVAQSLDPLY, RTAFEMLGYLNEHLNLKKQASESYRRVVSILQER, NSALQHYGRSLCAVGQYQEAIQTFSSTPLTE, FDDLTGIALAFFKKGLLQESMKAYKQALSVAKSD, and HNAWHWLAEVYQSLGMMMDAEMCYRKSLQLASQQ.

This chain is Tetratricopeptide repeat protein 37 (ttc37), found in Xenopus laevis (African clawed frog).